A 241-amino-acid polypeptide reads, in one-letter code: Phosphoribosylaminoimidazole-succinocarboxamide synthase (241 aa).

This sequence belongs to the SAICAR synthetase family.

The catalysed reaction is 5-amino-1-(5-phospho-D-ribosyl)imidazole-4-carboxylate + L-aspartate + ATP = (2S)-2-[5-amino-1-(5-phospho-beta-D-ribosyl)imidazole-4-carboxamido]succinate + ADP + phosphate + 2 H(+). It functions in the pathway purine metabolism; IMP biosynthesis via de novo pathway; 5-amino-1-(5-phospho-D-ribosyl)imidazole-4-carboxamide from 5-amino-1-(5-phospho-D-ribosyl)imidazole-4-carboxylate: step 1/2. The chain is Phosphoribosylaminoimidazole-succinocarboxamide synthase from Oenococcus oeni (strain ATCC BAA-331 / PSU-1).